We begin with the raw amino-acid sequence, 523 residues long: Putative UDP-glucuronosyltransferase ugt-50 (523 aa).

Residues 1 to 25 (MHYSQMRWMFFCLTALLHGSFIVNA) form the signal peptide. 4 N-linked (GlcNAc...) asparagine glycosylation sites follow: N84, N248, N283, and N487. The chain crosses the membrane as a helical span at residues 490 to 508 (IIEHNHLDLFFYLCIISLL).

Belongs to the UDP-glycosyltransferase family.

The protein localises to the membrane. The catalysed reaction is glucuronate acceptor + UDP-alpha-D-glucuronate = acceptor beta-D-glucuronoside + UDP + H(+). This Caenorhabditis elegans protein is Putative UDP-glucuronosyltransferase ugt-50 (ugt-50).